We begin with the raw amino-acid sequence, 282 residues long: Glucuronoxylan 4-O-methyltransferase 1 (282 aa).

Residues 13 to 33 (VLLVFLLATLILIFIVRSTLT) form a helical membrane-spanning segment.

This sequence belongs to the methyltransferase superfamily. Expressed in rosette leaves, stems, flowers and siliques.

It localises to the golgi apparatus membrane. The catalysed reaction is glucuronoxylan D-glucuronate + n S-adenosyl-L-methionine = glucuronoxylan 4-O-methyl-D-glucuronate + n S-adenosyl-L-homocysteine + n H(+). Functionally, methyltransferase catalyzing 4-O-methylation of glucuronic acid side chains on xylan. In Arabidopsis thaliana (Mouse-ear cress), this protein is Glucuronoxylan 4-O-methyltransferase 1 (GXM1).